The chain runs to 382 residues: Protein farnesyltransferase subunit beta (382 aa).

PFTB repeat units follow at residues 78–119, 129–170, 178–219, 226–268, and 286–328; these read CERA…CLCD, RDRL…SLVG, FEGT…ALLG, EIKL…VIVA, and PEKL…SSIA. (2E,6E)-farnesyl diphosphate contacts are provided by residues 204–207 and 247–250; these read HGGY and RSNK. D253 and C255 together coordinate Zn(2+). 256 to 259 contacts (2E,6E)-farnesyl diphosphate; it reads YSWW. A Zn(2+)-binding site is contributed by H316.

The protein belongs to the protein prenyltransferase subunit beta family. As to quaternary structure, heterodimer of an alpha(cwp1) and a beta(cpp1) subunit. The cofactor is Zn(2+).

It carries out the reaction L-cysteinyl-[protein] + (2E,6E)-farnesyl diphosphate = S-(2E,6E)-farnesyl-L-cysteinyl-[protein] + diphosphate. In terms of biological role, catalyzes the transfer of a farnesyl moiety from farnesyl diphosphate to a cysteine at the fourth position from the C-terminus of several proteins. The beta(cpp1) subunit is responsible for peptide-binding. In Schizosaccharomyces pombe (strain 972 / ATCC 24843) (Fission yeast), this protein is Protein farnesyltransferase subunit beta (cpp1).